A 200-amino-acid polypeptide reads, in one-letter code: Peptidyl-tRNA hydrolase (200 aa).

F16 contributes to the tRNA binding site. Residue H21 is the Proton acceptor of the active site. TRNA-binding residues include F67, N69, and N115.

This sequence belongs to the PTH family. In terms of assembly, monomer.

It is found in the cytoplasm. It carries out the reaction an N-acyl-L-alpha-aminoacyl-tRNA + H2O = an N-acyl-L-amino acid + a tRNA + H(+). Functionally, hydrolyzes ribosome-free peptidyl-tRNAs (with 1 or more amino acids incorporated), which drop off the ribosome during protein synthesis, or as a result of ribosome stalling. In terms of biological role, catalyzes the release of premature peptidyl moieties from peptidyl-tRNA molecules trapped in stalled 50S ribosomal subunits, and thus maintains levels of free tRNAs and 50S ribosomes. The polypeptide is Peptidyl-tRNA hydrolase (Prochlorococcus marinus (strain MIT 9215)).